The primary structure comprises 410 residues: Voltage-dependent chloride channel 2, chloroplastic (410 aa).

Topologically, residues 1-110 (MYQSMNLSFS…RHVSSSPSSR (110 aa)) are lumenal, thylakoid. A helical membrane pass occupies residues 111–131 (VILSLIPPVFFFTTVAILIAG). The Stromal segment spans residues 132-147 (YNSAVDLDWLPDFFPV). Residues 148–168 (LRASPLPYQLTAPALALLLVF) form a helical membrane-spanning segment. Topologically, residues 169 to 315 (RTEASYSRFE…PLSYTRLTSR (147 aa)) are lumenal, thylakoid. 2 helical membrane-spanning segments follow: residues 316 to 336 (FLVL…HWNV) and 337 to 357 (VPAT…GVLI). The Lumenal, thylakoid portion of the chain corresponds to 358–410 (EEPFSMLALDELCAMVLSNSDEAVESKEVIRNRIIAKKRILEIKHSSNGWHKS).

It belongs to the anion channel-forming bestrophin (TC 1.A.46) family. Voltage-dependent chloride channel subfamily. As to expression, mostly expressed in flowers and, to a lower extent, in leaves, stems and roots.

It localises to the plastid. Its subcellular location is the chloroplast thylakoid membrane. The enzyme catalyses chloride(in) = chloride(out). Voltage-dependent chloride (Cl) channel probably contributing to proton motive force (PMF) partitioning across the thylakoid membrane by anion influx into the lumen. Influences thylakoid ultrastructure, including lumen size and organization. In Arabidopsis thaliana (Mouse-ear cress), this protein is Voltage-dependent chloride channel 2, chloroplastic.